A 267-amino-acid chain; its full sequence is Phosphatidylglycerol--prolipoprotein diacylglyceryl transferase (267 aa).

Helical transmembrane passes span Val21 to Gly41, Leu60 to Tyr80, and Ile95 to Trp115. Arg143 is a binding site for a 1,2-diacyl-sn-glycero-3-phospho-(1'-sn-glycerol). 2 helical membrane-spanning segments follow: residues Gly203–Phe223 and Gly240–Tyr260.

The protein belongs to the Lgt family.

It is found in the cell inner membrane. It carries out the reaction L-cysteinyl-[prolipoprotein] + a 1,2-diacyl-sn-glycero-3-phospho-(1'-sn-glycerol) = an S-1,2-diacyl-sn-glyceryl-L-cysteinyl-[prolipoprotein] + sn-glycerol 1-phosphate + H(+). It functions in the pathway protein modification; lipoprotein biosynthesis (diacylglyceryl transfer). Its function is as follows. Catalyzes the transfer of the diacylglyceryl group from phosphatidylglycerol to the sulfhydryl group of the N-terminal cysteine of a prolipoprotein, the first step in the formation of mature lipoproteins. This is Phosphatidylglycerol--prolipoprotein diacylglyceryl transferase from Glaesserella parasuis serovar 5 (strain SH0165) (Haemophilus parasuis).